The chain runs to 342 residues: Probable tyrosine--tRNA ligase, cytoplasmic (342 aa).

L-tyrosine is bound at residue Tyr-48. The short motif at Ile-53 to Tyr-61 is the 'HIGH' region element. Positions 175, 179, 182, and 197 each coordinate L-tyrosine. A 'KMSKS' region motif is present at residues Lys-231–Ser-235.

It belongs to the class-I aminoacyl-tRNA synthetase family. As to quaternary structure, homodimer.

It localises to the cytoplasm. It catalyses the reaction tRNA(Tyr) + L-tyrosine + ATP = L-tyrosyl-tRNA(Tyr) + AMP + diphosphate + H(+). The protein is Probable tyrosine--tRNA ligase, cytoplasmic of Enterocytozoon bieneusi (strain H348) (Microsporidian parasite).